The primary structure comprises 319 residues: Olfactory receptor 8U8 (319 aa).

Over 1–28 (MAHINCTQATEFILVGLTDHQELKMPLF) the chain is Extracellular. A glycan (N-linked (GlcNAc...) asparagine) is linked at Asn5. Residues 29–49 (VLFLSIYLFTVVGNLGLILLI) form a helical membrane-spanning segment. The Cytoplasmic portion of the chain corresponds to 50–56 (RADTSLN). Residues 57 to 77 (TPMYFFLSNLAFVDFCYSSVI) form a helical membrane-spanning segment. The Extracellular segment spans residues 78-97 (TPKMLGNFLYKQNVISFDAC). The cysteines at positions 97 and 179 are disulfide-linked. The chain crosses the membrane as a helical span at residues 98-118 (ATQLGCFLTFMVSESLLLASM). Topologically, residues 119-122 (AYDR) are cytoplasmic. A helical membrane pass occupies residues 123–143 (YVAICNPLLYMVVMTPGICIQ). The Extracellular portion of the chain corresponds to 144-204 (LVAVPYSYSF…KQLWILACAG (61 aa)). A helical transmembrane segment spans residues 205-225 (ITFICSVLIVFVSYMFIIFAI). Over 226 to 239 (LRMSSAEGRRKAFS) the chain is Cytoplasmic. The helical transmembrane segment at 240–260 (TCSSHMLAVTIFYGTLIFMYL) threads the bilayer. Residues 261–271 (QPSSSHSLDAD) lie on the Extracellular side of the membrane. A helical transmembrane segment spans residues 272 to 292 (KMASVFYTVIIPMLNPLIYSL). Topologically, residues 293–319 (RNKDVKDALKKVIINRNHAFIFLKLRK) are cytoplasmic.

This sequence belongs to the G-protein coupled receptor 1 family.

Its subcellular location is the cell membrane. In terms of biological role, odorant receptor. In Homo sapiens (Human), this protein is Olfactory receptor 8U8 (OR8U8).